We begin with the raw amino-acid sequence, 100 residues long: Urease subunit gamma (100 aa).

It belongs to the urease gamma subunit family. Heterotrimer of UreA (gamma), UreB (beta) and UreC (alpha) subunits. Three heterotrimers associate to form the active enzyme.

It localises to the cytoplasm. It catalyses the reaction urea + 2 H2O + H(+) = hydrogencarbonate + 2 NH4(+). It participates in nitrogen metabolism; urea degradation; CO(2) and NH(3) from urea (urease route): step 1/1. The polypeptide is Urease subunit gamma (Opitutus terrae (strain DSM 11246 / JCM 15787 / PB90-1)).